Consider the following 118-residue polypeptide: Small ribosomal subunit protein uS13 (118 aa).

The interval 91–118 (HRRSLPVRGQRTKTNARTRKGPRKPIKA) is disordered.

The protein belongs to the universal ribosomal protein uS13 family. Part of the 30S ribosomal subunit. Forms a loose heterodimer with protein S19. Forms two bridges to the 50S subunit in the 70S ribosome.

Its function is as follows. Located at the top of the head of the 30S subunit, it contacts several helices of the 16S rRNA. In the 70S ribosome it contacts the 23S rRNA (bridge B1a) and protein L5 of the 50S subunit (bridge B1b), connecting the 2 subunits; these bridges are implicated in subunit movement. Contacts the tRNAs in the A and P-sites. The chain is Small ribosomal subunit protein uS13 from Francisella philomiragia subsp. philomiragia (strain ATCC 25017 / CCUG 19701 / FSC 153 / O#319-036).